The chain runs to 57 residues: DNA-directed RNA polymerase subunit Rpo6 (57 aa).

It belongs to the archaeal Rpo6/eukaryotic RPB6 RNA polymerase subunit family. In terms of assembly, part of the RNA polymerase complex.

It localises to the cytoplasm. The enzyme catalyses RNA(n) + a ribonucleoside 5'-triphosphate = RNA(n+1) + diphosphate. Functionally, DNA-dependent RNA polymerase (RNAP) catalyzes the transcription of DNA into RNA using the four ribonucleoside triphosphates as substrates. In Thermococcus onnurineus (strain NA1), this protein is DNA-directed RNA polymerase subunit Rpo6.